Here is a 749-residue protein sequence, read N- to C-terminus: Formate acetyltransferase (749 aa).

In terms of domain architecture, PFL spans 3-619 (ETNKNHATAW…KTGNTPDGRK (617 aa)). Catalysis depends on Cys-413, which acts as the S-acetylcysteine intermediate. The Cysteine radical intermediate role is filled by Cys-414. Residues 626–749 (PGANPMHGRD…VISRTFHESM (124 aa)) enclose the Glycine radical domain. Glycine radical is present on Gly-724.

This sequence belongs to the glycyl radical enzyme (GRE) family. PFL subfamily. Homodimer.

Its subcellular location is the cytoplasm. It carries out the reaction formate + acetyl-CoA = pyruvate + CoA. It functions in the pathway fermentation; pyruvate fermentation; formate from pyruvate: step 1/1. Its function is as follows. Catalyzes the conversion of pyruvate to formate and acetyl-CoA. This chain is Formate acetyltransferase (pflB), found in Staphylococcus aureus (strain USA300).